Consider the following 143-residue polypeptide: uncharacterized protein (143 aa).

The HTH cro/C1-type domain maps to 24 to 78 (IRQRRRWQNMSQAALGEAIGVTFQQVQKYEKGSNRVGAGRLQQISDALEVHPSYF). The H-T-H motif DNA-binding region spans 35–54 (QAALGEAIGVTFQQVQKYEK).

This is an uncharacterized protein from Sinorhizobium fredii (strain NBRC 101917 / NGR234).